Reading from the N-terminus, the 468-residue chain is Argininosuccinate lyase (468 aa).

This sequence belongs to the lyase 1 family. Argininosuccinate lyase subfamily.

The protein resides in the cytoplasm. The catalysed reaction is 2-(N(omega)-L-arginino)succinate = fumarate + L-arginine. It participates in amino-acid biosynthesis; L-arginine biosynthesis; L-arginine from L-ornithine and carbamoyl phosphate: step 3/3. The protein is Argininosuccinate lyase of Zymomonas mobilis subsp. mobilis (strain ATCC 31821 / ZM4 / CP4).